The sequence spans 228 residues: Ribonuclease H (228 aa).

The RNase H type-1 domain occupies glycine 2–arginine 142. Positions 11, 49, 71, and 134 each coordinate Mg(2+).

It belongs to the RNase H family. Monomer. Mg(2+) serves as cofactor.

The protein resides in the cytoplasm. The catalysed reaction is Endonucleolytic cleavage to 5'-phosphomonoester.. In terms of biological role, endonuclease that specifically degrades the RNA of RNA-DNA hybrids. The chain is Ribonuclease H from Methylorubrum extorquens (strain PA1) (Methylobacterium extorquens).